The sequence spans 96 residues: Essential MCU regulator, mitochondrial (96 aa).

Residues 1–34 constitute a mitochondrion transit peptide; it reads MIVSRLTFPLQAAKLVARKAAGNPSNSIIQRRHM. A helical transmembrane segment spans residues 52-72; sequence PFGLFAIFCAVIPGLFIGATI.

The protein belongs to the SMDT1/EMRE family.

The protein localises to the mitochondrion inner membrane. Its function is as follows. Essential regulatory subunit of the mitochondrial calcium uniporter (mcu) channel, a protein that mediates calcium uptake into mitochondria. The sequence is that of Essential MCU regulator, mitochondrial from Drosophila pseudoobscura pseudoobscura (Fruit fly).